Here is a 728-residue protein sequence, read N- to C-terminus: LPS-assembly protein LptD (728 aa).

Residues 1–21 (MSALPGFTLAALLLNVSLAEA) form the signal peptide.

This sequence belongs to the LptD family. As to quaternary structure, component of the lipopolysaccharide transport and assembly complex. Interacts with LptE and LptA.

Its subcellular location is the cell outer membrane. Together with LptE, is involved in the assembly of lipopolysaccharide (LPS) at the surface of the outer membrane. This Thiobacillus denitrificans (strain ATCC 25259 / T1) protein is LPS-assembly protein LptD.